The following is a 588-amino-acid chain: Ribonuclease Y (588 aa).

A helical membrane pass occupies residues 7 to 27 (VLLVAVLLLALIVLGAVLVGV). A disordered region spans residues 130–162 (ARRSGEREAAVLATTTREQAAEVERRAARMDDR). The segment covering 148–162 (QAAEVERRAARMDDR) has biased composition (basic and acidic residues). Positions 278-359 (VVSVLHLPGD…HRIEEVHDLA (82 aa)) constitute a KH domain. One can recognise an HD domain in the interval 404 to 497 (VLKHLVETAH…TQASDACSGG (94 aa)).

It belongs to the RNase Y family.

It is found in the cell membrane. Its function is as follows. Endoribonuclease that initiates mRNA decay. This Salinispora arenicola (strain CNS-205) protein is Ribonuclease Y.